The following is a 344-amino-acid chain: Uroporphyrinogen decarboxylase (344 aa).

Substrate contacts are provided by residues Arg26–Arg30, Phe45, Asp75, Tyr151, Ser206, and His320.

The protein belongs to the uroporphyrinogen decarboxylase family. Homodimer.

It localises to the cytoplasm. The catalysed reaction is uroporphyrinogen III + 4 H(+) = coproporphyrinogen III + 4 CO2. The protein operates within porphyrin-containing compound metabolism; protoporphyrin-IX biosynthesis; coproporphyrinogen-III from 5-aminolevulinate: step 4/4. Catalyzes the decarboxylation of four acetate groups of uroporphyrinogen-III to yield coproporphyrinogen-III. In Staphylococcus epidermidis (strain ATCC 35984 / DSM 28319 / BCRC 17069 / CCUG 31568 / BM 3577 / RP62A), this protein is Uroporphyrinogen decarboxylase.